A 261-amino-acid chain; its full sequence is MGSLPSRRKSLPSPSLSSSVQGQGPVTMEAERSKATAVALGSFPAGGPAELSLRLGEPLTIVSEDGDWWTVLSEVSGREYNIPSVHVAKVSHGWLYEGLSREKAEELLLLPGNPGGAFLIRESQTRRGSYSLSVRLSRPASWDRIRHYRIHCLDNGWLYISPRLTFPSLQALVDHYSELADDICCLLKEPCVLQRAGPLPGKDIPLPVTVQRTPLNWKELDSSLLFSEAATGEESLLSEGLRESLSFYISLNDEAVSLDDA.

Residues 1-10 (MGSLPSRRKS) are compositionally biased toward basic residues. The interval 1-31 (MGSLPSRRKSLPSPSLSSSVQGQGPVTMEAE) is disordered. Gly2 carries N-myristoyl glycine lipidation. The 61-residue stretch at 32–92 (RSKATAVALG…PSVHVAKVSH (61 aa)) folds into the SH3 domain. One can recognise an SH2 domain in the interval 94–191 (WLYEGLSREK…DICCLLKEPC (98 aa)). Residues 195 to 261 (RAGPLPGKDI…NDEAVSLDDA (67 aa)) form an SLA C-terminal region.

As to quaternary structure, interacts (via SH2 domain) with ZAP70 (phosphorylated) and CD3Z (phosphorylated). Interacts (via SH2 domain) with CSF1R (phosphorylated). Interacts (via its C-terminal domain) with CBL (phosphorylated). Post-translationally, phosphorylated by CSF1R. Predominantly expressed in immune system, with highest levels in peripheral blood leukocytes. Expressed in spleen, thymus and lymph nodes. Expressed in T-cells as well as in monocytes, and at low level in B-cells. Also detected in placenta, prostate, skin, retina and colon.

The protein resides in the cytoplasm. Its subcellular location is the cell membrane. It localises to the cytoplasmic vesicle. In terms of biological role, adapter protein, which negatively regulates T-cell receptor (TCR) signaling. Inhibits T-cell antigen-receptor induced activation of nuclear factor of activated T-cells. May act by linking signaling proteins such as ZAP70 with CBL, leading to a CBL dependent degradation of signaling proteins. The protein is Src-like-adapter 2 (SLA2) of Homo sapiens (Human).